Reading from the N-terminus, the 141-residue chain is Galactose-6-phosphate isomerase subunit LacA (141 aa).

Belongs to the LacAB/RpiB family. Heteromultimeric protein consisting of LacA and LacB.

It carries out the reaction aldehydo-D-galactose 6-phosphate = keto-D-tagatose 6-phosphate. It functions in the pathway carbohydrate metabolism; D-galactose 6-phosphate degradation; D-tagatose 6-phosphate from D-galactose 6-phosphate: step 1/1. This is Galactose-6-phosphate isomerase subunit LacA from Streptococcus pneumoniae (strain Taiwan19F-14).